We begin with the raw amino-acid sequence, 181 residues long: Inner membrane-spanning protein YciB (181 aa).

5 helical membrane-spanning segments follow: residues 22–42 (IYTATGALIVATAVQLILTYV), 50–70 (MQLITFIMVTVFGGMTIFLHD), 80–100 (IVYAVFAAGLIIAQILGRPII), 118–138 (INYAWILFFTACSIANLYVAF), and 148–168 (FKVFGLLGLTFIYTLLTGMYV).

Belongs to the YciB family.

It localises to the cell inner membrane. Functionally, plays a role in cell envelope biogenesis, maintenance of cell envelope integrity and membrane homeostasis. The polypeptide is Inner membrane-spanning protein YciB (Aliivibrio salmonicida (strain LFI1238) (Vibrio salmonicida (strain LFI1238))).